The following is a 98-amino-acid chain: UPF0251 protein Sbal_3699 (98 aa).

This sequence belongs to the UPF0251 family.

The chain is UPF0251 protein Sbal_3699 from Shewanella baltica (strain OS155 / ATCC BAA-1091).